The following is a 55-amino-acid chain: MAKGIREKIRLVSSAGTGHFYTTDKNKRNMPGKFEIKKYDPVVRQHVVYKEAKIK.

It belongs to the bacterial ribosomal protein bL33 family.

The sequence is that of Large ribosomal subunit protein bL33 from Vibrio cholerae serotype O1 (strain ATCC 39541 / Classical Ogawa 395 / O395).